We begin with the raw amino-acid sequence, 264 residues long: Leukocyte receptor cluster member 1 (264 aa).

2 disordered regions span residues 1–37 (MNILPKKSWHVRNKDNVARVRRDEAQAREEEKERERR) and 49–76 (FLRKKARHQNSLPELEAAEAGAPGSGPV). Residues 12–37 (RNKDNVARVRRDEAQAREEEKERERR) are compositionally biased toward basic and acidic residues. A coiled-coil region spans residues 16-46 (NVARVRRDEAQAREEEKERERRVLLAQQEAR). Ser59 carries the phosphoserine modification. Over residues 59–75 (SLPELEAAEAGAPGSGP) the composition is skewed to low complexity. A coiled-coil region spans residues 89–115 (VIRGNKEYKEEKRQEKERQEKALGILT). The interval 118–264 (GQSAAEAQTQ…PRQQDPHLTH (147 aa)) is disordered. Composition is skewed to basic and acidic residues over residues 146–162 (PDEKIKSRLDPLREMQK) and 170–214 (HGGD…RSRA). A coiled-coil region spans residues 196-222 (LDQLRAERLRREAAERSRAEALLARVQ). Ser245 carries the phosphoserine modification.

The sequence is that of Leukocyte receptor cluster member 1 (LENG1) from Homo sapiens (Human).